Consider the following 269-residue polypeptide: Cell cycle regulator CcrZ (269 aa).

ATP is bound by residues Phe39, His76, Trp77, Met78, and Gly80. The short motif at 164–171 is the Brenner's motif [HXDhX3N] element; it reads HCDVNHNN. Residue Asp166 is the Proton acceptor of the active site. Residues 180–203 carry the APH motif; that stretch reads LYLIDWDGAMIADPAMDLGPLLYH.

Belongs to the aminoglycoside phosphotransferase family. Monomer in solution. Interacts with DnaA (via domains I (1-82) and III (111-326)). Interacts with DnaB. Interacts with FtsZ.

Its subcellular location is the cytoplasm. It catalyses the reaction D-ribose + ATP = D-ribose 5-phosphate + ADP + H(+). The enzyme catalyses 2-deoxy-D-ribose + ATP = 2-deoxy-D-ribose 5-phosphate + ADP + H(+). With respect to regulation, activated by D-ribose and 2-deoxy-D-ribose. Slightly activated by kanamycin and gentamicin. In terms of biological role, plays a role in cell cycle regulation and chromosome integrity. Activates DnaA-dependent chromosomal DNA replication initiation ensuring that the chromosome is replicated at the right time during the cell cycle. May regulate replication initiation through phosphorylation of a possible second messenger or metabolite, and by interacting with replication initiation proteins. Has ATPase activity with D-ribose and 2-deoxy-D-ribose in vitro, but not with choline. Involved in DNA damage response. The chain is Cell cycle regulator CcrZ from Bacillus subtilis (strain 168).